Consider the following 75-residue polypeptide: Putative primary metabolism protein HVA1 (75 aa).

The segment covering 1–13 (MSVQDKQGQNINV) has biased composition (polar residues). Disordered stretches follow at residues 1–24 (MSVQ…YRGG) and 40–75 (AAEK…DKQK).

Its function is as follows. May play a role in primary metabolism. The sequence is that of Putative primary metabolism protein HVA1 from Cryptococcus neoformans var. grubii serotype A (strain H99 / ATCC 208821 / CBS 10515 / FGSC 9487) (Filobasidiella neoformans var. grubii).